A 96-amino-acid chain; its full sequence is Secretoglobin family 2B member 2 (96 aa).

Residues 1–23 (MRVTSATCALLLALICSVQLGDA) form the signal peptide.

The protein belongs to the secretoglobin family.

The protein localises to the secreted. This chain is Secretoglobin family 2B member 2 (SCGB2B2), found in Homo sapiens (Human).